The following is a 647-amino-acid chain: XK-related protein 4 (647 aa).

The helical transmembrane segment at 142 to 162 threads the bilayer; sequence WFGLTLFFVVLGSLSVQVFSF. A disordered region spans residues 193 to 238; sequence VSSGSAAGEGEARPSTPQRQASNASKSNIAATNSGSNSNGATRTSG. Phosphoserine is present on serine 197. Residues 207–236 show a composition bias toward polar residues; sequence STPQRQASNASKSNIAATNSGSNSNGATRT. Transmembrane regions (helical) follow at residues 245–265, 328–348, 362–382, 393–415, 425–445, 454–474, and 484–504; these read CSFC…GQVW, LQAL…WALA, KPIS…TIAA, VFQL…WIVH, WEEI…WFNV, LFIY…LWYL, and FAIP…VFML.

Belongs to the XK family. As to quaternary structure, homodimer; homodimerization takes place upon caspase cleavage. Interacts with the processed C-terminus of XRCC4 (protein XRCC4, C-terminus); interaction promotes the phospholipid scramblase activity. Post-translationally, undergoes proteolytic processing by caspase-3 (CASP3), caspase-6 (CASP6) and caspase-7 (CASP7) to generate the XK-related protein 4, processed form, leading to its activation.

Its subcellular location is the cell membrane. It catalyses the reaction a 1,2-diacyl-sn-glycero-3-phospho-L-serine(in) = a 1,2-diacyl-sn-glycero-3-phospho-L-serine(out). With respect to regulation, phospholipid scramblase activity is activated upon caspase cleavage to generate the XK-related protein 4, processed form. Does not act prior the onset of apoptosis. Its activity is regulated as follows. Homodimerizes upon caspase cleavage. Phospholipid scramblase activity is activated following interaction with the processed C-terminus of XRCC4 (protein XRCC4, C-terminus). In terms of biological role, phospholipid scramblase that promotes phosphatidylserine exposure on apoptotic cell surface. Phosphatidylserine is a specific marker only present at the surface of apoptotic cells and acts as a specific signal for engulfment. The sequence is that of XK-related protein 4 from Rattus norvegicus (Rat).